The following is a 277-amino-acid chain: Large ribosomal subunit protein uL2c (277 aa).

A compositionally biased stretch (polar residues) spans 1–11 (MNTRSYSTFTP). Disordered regions lie at residues 1-47 (MNTR…RNNS) and 254-277 (YSAL…RRRK).

This sequence belongs to the universal ribosomal protein uL2 family. Part of the 50S ribosomal subunit.

It is found in the plastid. The protein localises to the chloroplast. This chain is Large ribosomal subunit protein uL2c (rpl2), found in Cryptomeria japonica (Japanese cedar).